A 112-amino-acid chain; its full sequence is Prostatic steroid-binding protein C2 (112 aa).

A signal peptide spans 1 to 20 (MRLSLCLLTILVVCCYEANG). Gln21 bears the Pyrrolidone carboxylic acid mark.

The protein belongs to the secretoglobin family. Lipophilin subfamily. As to quaternary structure, prostatein is composed of three different peptides called C1, C2 and C3. These form covalent C1:C3 (F) and C2:C3 (S) heterodimers whose noncovalent association forms tetrameric (C1:C3/C3:C2) prostatein molecules. Linked by three disulfide bonds to C3. Post-translationally, the N-terminus is blocked.

Its subcellular location is the secreted. In terms of biological role, part of prostatein which is the major secretory glycoprotein of ventral prostate gland. The sequence is that of Prostatic steroid-binding protein C2 (Psbpc2) from Rattus norvegicus (Rat).